Here is a 125-residue protein sequence, read N- to C-terminus: Ribosome-binding factor A (125 aa).

Belongs to the RbfA family. As to quaternary structure, monomer. Binds 30S ribosomal subunits, but not 50S ribosomal subunits or 70S ribosomes.

The protein localises to the cytoplasm. One of several proteins that assist in the late maturation steps of the functional core of the 30S ribosomal subunit. Associates with free 30S ribosomal subunits (but not with 30S subunits that are part of 70S ribosomes or polysomes). Required for efficient processing of 16S rRNA. May interact with the 5'-terminal helix region of 16S rRNA. The chain is Ribosome-binding factor A from Chloroherpeton thalassium (strain ATCC 35110 / GB-78).